The sequence spans 193 residues: MRKGLTLVEVLVTLVIMGIAFAALLTSQLANLRASAQARFATDAKAAAVQVLERRSAEVLKSEIVPALSPYKDAPLDPDNPSGNWRSFYFVDYYFSCPTRVAPSPKQRGGSVANLRPGLTCSGTETIFGIPVAWDIRGENGILGEGVVTVVVTATHPRGPKVTLGRRVTCYDVYPSPTQDQPAPCPPPGGGRP.

Residues 1 to 4 (MRKG) constitute a propeptide, leader sequence. Leu-5 is modified (N-methylleucine). The chain crosses the membrane as a helical span at residues 5 to 25 (LTLVEVLVTLVIMGIAFAALL).

It is found in the cell inner membrane. It localises to the cell outer membrane. Its subcellular location is the periplasm. Functionally, plays an essential role in natural DNA transformation but is not required for pilus biogenesis. In Thermus thermophilus (strain ATCC BAA-163 / DSM 7039 / HB27), this protein is Pilin-like protein PilA2 (pilA2).